We begin with the raw amino-acid sequence, 503 residues long: MDDIFNFELPLHDRIKAIVKFGDETTIKRLISLLTISNSSIIKNTLYHLCKFCSDISCVLRLEIALALIDYEKEETEPSEIIGFEALDYVCFSMHKSKEIPFSCKLNAYLILNSGLPNLKRVYLYLYDMLTDSSTTFQFKYKTVKFLVSEREENNITSLMVEYCISVLLSNFHDSSYPKINNETYEDYLQIFILTCQLSLSYVPKLKCSCIAENKLLEICKNQNLSVNIRADASDMLLSYGSSENKEEAKIILDSLSFDNHTIKTIYNNKENVHTSTINKTAINTITIIIEDVNKMFQREDIWILTENILQNLIEKYPPNFKPQIKSQIDNAIKAYNRIMYLDNALYTAYNFNLKNIMNYVWTFINNSNKVSNKVELEKRLIEEMREMNNTCSSGYLTRFANIFSGFLENGGVFIGWDEQILSIFYGKVNSAITSSLNKDLILENLIETENENDKQEFQKLLRTILPNIIESIKIEFKDHISESDIDLYIRRALSVFEGHEFI.

The stretch at 437–465 (LNKDLILENLIETENENDKQEFQKLLRTI) forms a coiled coil.

It belongs to the IIV-6 467R family.

This is an uncharacterized protein from Invertebrate iridescent virus 6 (IIV-6).